We begin with the raw amino-acid sequence, 438 residues long: Enolase (438 aa).

Substrate is bound by residues His159 and Glu168. The Proton donor role is filled by Glu211. Mg(2+)-binding residues include Asp246, Glu297, and Asp322. Substrate-binding residues include Glu297 and Asp322. The Proton acceptor role is filled by Lys347. Substrate is bound by residues 374 to 377 (SHRS) and Lys398.

Belongs to the enolase family. As to quaternary structure, homodimer. Mg(2+) serves as cofactor.

Its subcellular location is the cytoplasm. The enzyme catalyses (2R)-2-phosphoglycerate = phosphoenolpyruvate + H2O. The protein operates within carbohydrate degradation; glycolysis; pyruvate from D-glyceraldehyde 3-phosphate: step 4/5. This is Enolase (enoA) from Penicillium citrinum.